The primary structure comprises 531 residues: GPI alpha-1,2-mannosyltransferase 3 (531 aa).

Residue N84 is glycosylated (N-linked (GlcNAc...) asparagine). The next 3 helical transmembrane spans lie at 99–119 (GLRG…LYLL), 124–144 (VWFL…IADV), and 174–196 (YCAT…LYYY). N-linked (GlcNAc...) asparagine glycosylation occurs at N204. The next 6 membrane-spanning stretches (helical) occupy residues 210–230 (LICV…WIPL), 249–269 (YLPI…IFFG), 303–323 (GVPV…MVTP), 328–348 (ILLV…HKEF), 350–370 (FIYP…SNLK), and 375–395 (AAVG…GLIH). 2 N-linked (GlcNAc...) asparagine glycosylation sites follow: N414 and N476.

This sequence belongs to the glycosyltransferase 22 family. PIGB subfamily.

It is found in the endoplasmic reticulum membrane. Its pathway is glycolipid biosynthesis; glycosylphosphatidylinositol-anchor biosynthesis. Alpha-1,2-mannosyltransferase that catalyzes the transfer of the third mannose, via an alpha-1,2 bond, from a dolichol-phosphate-mannose (Dol-P-Man) to an alpha-D-Man-(1-&gt;6)-2-PEtn-alpha-D-Man-(1-&gt;4)-alpha-D-GlcN-(1-&gt;6)-(1-radyl,2-acyl-sn-glycero-3-phospho)-2-acyl-inositol intermediate to generate an alpha-D-Man-(1-&gt;2)-alpha-D-Man-(1-&gt;6)-2-PEtn-alpha-D-Man-(1-&gt;4)-alpha-D-GlcN-(1-&gt;6)-(1-radyl,2-acyl-sn-glycero-3-phospho)-2-acyl-inositol (also termed H6) and participates in the nineth step of the glycosylphosphatidylinositol-anchor biosynthesis. May also add the third mannose to an alpha-D-Man-(1-&gt;6)-alpha-D-Man-(1-&gt;4)-alpha-D-GlcN-(1-&gt;6)-(1-radyl,2-acyl-sn-glycero-3-phospho)-2-acyl-inositol (also termed H3) intermediate generating an alpha-D-Man-(1-&gt;2)-alpha-D-Man-(1-&gt;6)-alpha-D-Man-(1-&gt;4)-alpha-D-GlcN-(1-&gt;6)-(1-radyl,2-acyl-sn-glycero-3-phospho)-2-acyl-inositol (also termed H4). In Xenopus laevis (African clawed frog), this protein is GPI alpha-1,2-mannosyltransferase 3.